Consider the following 262-residue polypeptide: ATP synthase subunit a (262 aa).

7 helical membrane-spanning segments follow: residues 30 to 50 (ITSL…LTIF), 64 to 84 (WNIV…DQIG), 91 to 111 (LIYF…NILG), 123 to 143 (ISVT…IGFS), 149 to 169 (FFSL…LVLI), 195 to 215 (LFGV…SILL), and 220 to 240 (IGLP…VALL).

It belongs to the ATPase A chain family. F-type ATPases have 2 components, CF(1) - the catalytic core - and CF(0) - the membrane proton channel. CF(1) has five subunits: alpha(3), beta(3), gamma(1), delta(1), epsilon(1). CF(0) has three main subunits: a, b and c.

It localises to the mitochondrion inner membrane. Mitochondrial membrane ATP synthase (F(1)F(0) ATP synthase or Complex V) produces ATP from ADP in the presence of a proton gradient across the membrane which is generated by electron transport complexes of the respiratory chain. F-type ATPases consist of two structural domains, F(1) - containing the extramembraneous catalytic core and F(0) - containing the membrane proton channel, linked together by a central stalk and a peripheral stalk. During catalysis, ATP synthesis in the catalytic domain of F(1) is coupled via a rotary mechanism of the central stalk subunits to proton translocation. Key component of the proton channel; it may play a direct role in the translocation of protons across the membrane. The sequence is that of ATP synthase subunit a (ATP6) from Allomyces arbusculus (Aquatic fungus).